The following is a 292-amino-acid chain: MKNRIPLNALRAFEASARYLNFTKAGLELHVSQAAVSQHVRTLEAILGVNLFKRLPRGLQLTEEGLHLLPMINEAFSIMGSALERFHEGKIREVITVAVVGTFAVGWLLPRLSGFTKSYPWIDIRVITHNNVINLAAEGIDAAIRFGHGFWQSTENYKLFSAPHTVLCPPNVAKKLTTPEDMKDYRLLRTYRKEEWSSWFKAANLKPWPVTGPIFDSSRHMDDAAKICGDIALAPYKMFIHEIENGSLVKPFDIEVHLGGYWLTILKSRSNIELNNALNIFKTWLLNASHSI.

Residues 5–62 (IPLNALRAFEASARYLNFTKAGLELHVSQAAVSQHVRTLEAILGVNLFKRLPRGLQLT) form the HTH lysR-type domain. The segment at residues 22–41 (FTKAGLELHVSQAAVSQHVR) is a DNA-binding region (H-T-H motif).

Belongs to the LysR transcriptional regulatory family.

In terms of biological role, this protein is a positive regulator of gene expression of carbapenem-hydrolyzing beta-lactamase (smeA). Seems to also be a repressor of its own transcription. The protein is Carbapenem-hydrolyzing beta-lactamase transcriptional activator (smeR) of Serratia marcescens.